A 621-amino-acid polypeptide reads, in one-letter code: Autonomous transposable element EN-1 mosaic protein (621 aa).

Disordered regions lie at residues 1 to 119, 428 to 447, 498 to 530, and 549 to 621; these read MFRM…PPRR, YTRRSNFSAGSNRPRRPSAR, QQPPIITHPVSGQSSDRSTAAADGSQGSATSVQ, and RQPG…PPTE. 2 stretches are compositionally biased toward polar residues: residues 27–39 and 47–61; these read EGTTTSRSRQEQL and RGSSGPSNTEGTTSR. Over residues 82-102 the composition is skewed to acidic residues; that stretch reads AAVDAEAEEAAAELDDGEETS. Residues 570-594 show a composition bias toward low complexity; that stretch reads PPRGQSQSPGLPSHSPGSGSGSHHA.

Its function is as follows. This protein has most probably three functions; the mutator (M) function, for excision and transposition; the suppressor (S) function, which inhibits residual gene activity of certain alleles in which inhibitor elements are integrated; an activator (A) function is proposed, because inactive SPM can be activated by a second SPM. The protein is Autonomous transposable element EN-1 mosaic protein of Zea mays (Maize).